The chain runs to 578 residues: E3 ubiquitin protein ligase RIN2 (578 aa).

Transmembrane regions (helical) follow at residues 6–26, 58–78, 111–131, 161–181, 186–206, and 272–292; these read LPVS…WTEL, FTIA…VLSL, LVIP…TVLC, VYSV…LSLM, IGSA…FETL, and YLHI…VLFL. The segment at 337–379 adopts an RING-type; atypical zinc-finger fold; that stretch reads CAICREPMAKAKRLHCNHLFHLGCLRSWLDQGLNEVYSCPTCR. Residues 504–513 show a composition bias toward polar residues; sequence QASTSSTTVP. Residues 504–524 are disordered; it reads QASTSSTTVPPGNGGRTGGLH. The CUE domain occupies 538–578; that stretch reads NILAMAETVREVMPHVPDEIIFQDLQRTNSVAVTVNNLLQM.

Interacts (via C-terminus) with RPM1 (via N-terminus).

It localises to the membrane. It carries out the reaction S-ubiquitinyl-[E2 ubiquitin-conjugating enzyme]-L-cysteine + [acceptor protein]-L-lysine = [E2 ubiquitin-conjugating enzyme]-L-cysteine + N(6)-ubiquitinyl-[acceptor protein]-L-lysine.. It functions in the pathway protein modification; protein ubiquitination. Its function is as follows. E3 ubiquitin protein ligase that acts as a positive regulator of RPM1- and RPS2-dependent hypersensitive response (HR), in association with RIN3. Probably not required for RPM1 degradation during HR. The protein is E3 ubiquitin protein ligase RIN2 (RIN2) of Arabidopsis thaliana (Mouse-ear cress).